Here is a 493-residue protein sequence, read N- to C-terminus: Trichothecene 8-O-acetyltransferase (493 aa).

Positions 180 to 191 are enriched in polar residues; it reads QDQNENEVQQPK. Residues 180 to 199 form a disordered region; the sequence is QDQNENEVQQPKNLPDPDEP.

It functions in the pathway sesquiterpene biosynthesis; trichothecene biosynthesis. Trichothecene 8-O-acetyltransferase; part of 2-gene cluster involved in trichothecene C-8 modification that mediates the biosynthesis of T2-toxin. The biosynthesis of trichothecenes begins with the cyclization of farnesyl diphosphate to trichodiene and is catalyzed by the trichodiene synthase TRI5. Trichodiene undergoes a series of oxygenations catalyzed by the cytochrome P450 monooxygenase TRI4. TRI4 controls the addition of four oxygens at C-2, C-3, C-11, and the C-12, C-13-epoxide to form the intermediate isotrichotriol. Isotrichotriol then undergoes a non-enzymatic isomerization and cyclization to form isotrichodermol. During this process, the oxygen at the C-2 position becomes the pyran ring oxygen and the hydroxyl group at C-11 is lost. More complex type A trichothecenes are built by modifying isotrichodermol through a series of paired hydroxylation and acetylation or acylation steps. Isotrichodermol is converted to isotrichodermin by the acetyltransferase TRI101. TRI101 encodes a C-3 transacetylase that acts as a self-protection or resistance factor during biosynthesis and that the presence of a free C-3 hydroxyl group is a key component of Fusarium trichothecene phytotoxicity. A second hydroxyl group is added to C-15 by the trichothecene C-15 hydroxylase TRI11, producing 15-decalonectrin, which is then acetylated by TRI3, producing calonectrin. A third hydroxyl group is added at C-4 by the cytochrome P450 monooxygenase TRI13, converting calonectrin to 3,15-diacetoxyspirpenol, which is subsequently acetylated bythe acetyltransferase TRI7. A fourth hydroxyl group is added to C-8 by the cytochrome P450 monooxygenase TRI1, followed by the addition of an isovaleryl moiety by TRI16. Finally, the acetyl group is removed from the C-3 position by the trichothecene C-3 esterase TRI8 to produce T-2 toxin. This chain is Trichothecene 8-O-acetyltransferase, found in Fusarium sporotrichioides.